The primary structure comprises 214 residues: C-type lectin domain family 2 member L (214 aa).

Residues 1–56 form a disordered region; that stretch reads MEPAREPPSRARPPPPLAARPAPAPAAPRPRSPAEAEARGPEGLLRRSGSGYEGST. The segment covering 10–31 has biased composition (pro residues); that stretch reads RARPPPPLAARPAPAPAAPRPR. Ser-32 carries the post-translational modification Phosphoserine. A helical membrane pass occupies residues 69–89; that stretch reads LLLGAIAVLLFAILVVMSILA. The C-type lectin domain occupies 107-209; it reads YGRKCYFFSE…CLMTRPWVCS (103 aa). 2 disulfides stabilise this stretch: Cys-128–Cys-208 and Cys-187–Cys-200.

It localises to the membrane. The protein is C-type lectin domain family 2 member L (CLEC2L) of Homo sapiens (Human).